Here is a 180-residue protein sequence, read N- to C-terminus: MNTRLEKFYKENVVPALMKEFGYTNPMEVPKLVKVTLNMGVGEAASNKKILENAVADMSKISGQKPVVTKSRVSVASFKIRDGWPIGCKTTLRRAKMYEFLDRLINISLPRVRDFRGVSGRSFDGRGNFNMGVKEQIIFPEIDFDAVDAIRGMDIAVTTTAKTDAEAKALLAAFKFPFRN.

Belongs to the universal ribosomal protein uL5 family. In terms of assembly, part of the 50S ribosomal subunit; part of the 5S rRNA/L5/L18/L25 subcomplex. Contacts the 5S rRNA and the P site tRNA. Forms a bridge to the 30S subunit in the 70S ribosome.

In terms of biological role, this is one of the proteins that bind and probably mediate the attachment of the 5S RNA into the large ribosomal subunit, where it forms part of the central protuberance. In the 70S ribosome it contacts protein S13 of the 30S subunit (bridge B1b), connecting the 2 subunits; this bridge is implicated in subunit movement. Contacts the P site tRNA; the 5S rRNA and some of its associated proteins might help stabilize positioning of ribosome-bound tRNAs. This is Large ribosomal subunit protein uL5 from Xanthomonas oryzae pv. oryzae (strain MAFF 311018).